A 64-amino-acid polypeptide reads, in one-letter code: MADESKFEQAKGNVKETVGNVTDNKNLENEGKEDKASGKAKEFVENAKEKATDFIDKVKGNKGE.

A disordered region spans residues 1-40 (MADESKFEQAKGNVKETVGNVTDNKNLENEGKEDKASGKA). The span at 25–40 (KNLENEGKEDKASGKA) shows a compositional bias: basic and acidic residues.

This sequence belongs to the UPF0337 (CsbD) family.

The protein is UPF0337 protein SAR0874 of Staphylococcus aureus (strain MRSA252).